Reading from the N-terminus, the 458-residue chain is tRNA-2-methylthio-N(6)-dimethylallyladenosine synthase (458 aa).

The 120-residue stretch at 15-134 folds into the MTTase N-terminal domain; sequence KKVFIKTYGC…LPELLQQAQQ (120 aa). [4Fe-4S] cluster is bound by residues C24, C60, C97, C175, C179, and C182. Residues 161–393 form the Radical SAM core domain; it reads QKRGVSAFLT…QALLLDQQHR (233 aa). One can recognise a TRAM domain in the interval 396-457; sequence RSKIGQTTDV…SNSFVGEKAN (62 aa).

It belongs to the methylthiotransferase family. MiaB subfamily. In terms of assembly, monomer. The cofactor is [4Fe-4S] cluster.

The protein resides in the cytoplasm. It carries out the reaction N(6)-dimethylallyladenosine(37) in tRNA + (sulfur carrier)-SH + AH2 + 2 S-adenosyl-L-methionine = 2-methylsulfanyl-N(6)-dimethylallyladenosine(37) in tRNA + (sulfur carrier)-H + 5'-deoxyadenosine + L-methionine + A + S-adenosyl-L-homocysteine + 2 H(+). Catalyzes the methylthiolation of N6-(dimethylallyl)adenosine (i(6)A), leading to the formation of 2-methylthio-N6-(dimethylallyl)adenosine (ms(2)i(6)A) at position 37 in tRNAs that read codons beginning with uridine. In Bartonella bacilliformis (strain ATCC 35685 / KC583 / Herrer 020/F12,63), this protein is tRNA-2-methylthio-N(6)-dimethylallyladenosine synthase.